A 492-amino-acid polypeptide reads, in one-letter code: Virion host shutoff protein (492 aa).

4 disordered regions span residues 110–130 (EEASDVDASPPPSPITDSRPS), 143–165 (FAPGDRGTRAAGPGPAAPSGAPS), 288–307 (SQARRAARRERANSRSLESM), and 334–369 (EDDYEEDPPLQPPDVAGGPRDGARSSSSEILTPPEL). The segment covering 144-165 (APGDRGTRAAGPGPAAPSGAPS) has biased composition (low complexity).

It belongs to the herpesviridae VHS protein family. As to quaternary structure, interacts with human EIF4H, EIF4A1 and EIF4A2; interaction with eIF4AI and EIF4A2 presumably allows Vhs protein to associate with the eIF4F cap-binding complex.

It is found in the virion. Minor structural protein that acts as an endoribonuclease during lytic infection. Degrades host mRNAs in the cytoplasm by cutting them at preferred sites, including some in regions of translation initiation. Together with inhibition of host splicing by ICP27, contributes to an overall decrease in host protein synthesis. Also, after the onset of viral transcription, accelerates the turnover of viral mRNA, thereby facilitating the sequential expression of different classes of viral genes. Binds translation initiation factors eIF4H, eIF4AI, and eIF4AII, thereby may interact directly with the translation initiation complex and thus digest specifically mRNAs. Also impedes antigen presentation by major histocompatibility complex class I and class II molecules, inhibits secretion of cytokines that would otherwise recruit lymphocytes and neutrophils cells to the site of infection and blocks the activation of dendritic cells. Impedes the alpha/beta interferon-mediated response to infection. Inhibits the integrated stress response (ISR) in the infected cell, this function requires the endonuclease activity. Stress granule formation is thus inhibited, which allows protein synthesis and viral replication. The sequence is that of Virion host shutoff protein (UL41) from Human herpesvirus 2 (strain G) (HHV-2).